Here is an 856-residue protein sequence, read N- to C-terminus: Alanine/arginine aminopeptidase (856 aa).

Substrate is bound by residues E132 and 264–268; that span reads GAMEN. A Zn(2+)-binding site is contributed by H300. The active-site Proton acceptor is the E301. Zn(2+) is bound by residues H304 and E323.

This sequence belongs to the peptidase M1 family. It depends on Zn(2+) as a cofactor.

In terms of biological role, positive effector of glycogen accumulation. May be involved in nutrient-sensing. The protein is Alanine/arginine aminopeptidase (AAP1) of Saccharomyces cerevisiae (strain ATCC 204508 / S288c) (Baker's yeast).